The sequence spans 382 residues: MSLKEKTQSLFANAFGYPATHTIQAPGRVNLIGEHTDYNDGFVLPCAIDYQTVISCAPRDDRKVRVMAADYENQLDEFSLNAPIVAHENYQWANYVRGVVKHLQLRNNSFGGVDMVISGNVPQGAGLSSSASLEVAVGTVLQQLYHLPLDGAQIALNGQEAENQFVGCNCGIMDQLISALGKKDHALLIDCRSLGTKAVSMPKGVAVVIINSNFKRTLVGSEYNTRREQCETGARFFQQPALRDVTIEEFNAVAHELDPIVAKRVRHILTENARTVEAASALEQGDLKRMGELMAESHASMRDDFEITVPQIDTLAEIVKAVIGDKGGVRMTGGGFGGCIVALIPEELVPAVQQAVAEQYEAKTGIKETFYVCKPSQGAGQC.

Residue 34–37 (EHTD) participates in substrate binding. Residue 124–130 (GAGLSSS) participates in ATP binding. Mg(2+) is bound by residues Ser130 and Glu162. The active-site Proton acceptor is Asp174. A substrate-binding site is contributed by Tyr223.

This sequence belongs to the GHMP kinase family. GalK subfamily.

The protein localises to the cytoplasm. The catalysed reaction is alpha-D-galactose + ATP = alpha-D-galactose 1-phosphate + ADP + H(+). It participates in carbohydrate metabolism; galactose metabolism. Its function is as follows. Catalyzes the transfer of the gamma-phosphate of ATP to D-galactose to form alpha-D-galactose-1-phosphate (Gal-1-P). The chain is Galactokinase from Shigella boydii serotype 4 (strain Sb227).